Reading from the N-terminus, the 60-residue chain is Phycobilisome degradation protein NblA homolog 2 (60 aa).

This sequence to Synechococcus PCC 7942 NblA and some, to chloroplast ycf18.

The protein is Phycobilisome degradation protein NblA homolog 2 of Synechocystis sp. (strain ATCC 27184 / PCC 6803 / Kazusa).